Reading from the N-terminus, the 71-residue chain is Vitellogenin-A1 (71 aa).

The first 15 residues, 1–15, serve as a signal peptide directing secretion; it reads MRGIILALLLAIAGS. The 48-residue stretch at 24–71 folds into the Vitellogenin domain; sequence FSESKTSVYNYEAVILNGFPESGLSRAGIKINCKVEISAYAQRSYFLK.

In terms of tissue distribution, produced by the liver, secreted into the blood and then sequestered by receptor mediated endocytosis into growing oocytes, where it is generally cleaved, giving rise to the respective yolk components.

Precursor of the major egg-yolk proteins that are sources of nutrients during early development of oviparous organisms. In Xenopus laevis (African clawed frog), this protein is Vitellogenin-A1.